The chain runs to 201 residues: Histidinol dehydrogenase (201 aa).

This sequence belongs to the histidinol dehydrogenase family. In terms of assembly, homodimer. It depends on Zn(2+) as a cofactor.

It carries out the reaction L-histidinol + 2 NAD(+) + H2O = L-histidine + 2 NADH + 3 H(+). Its pathway is amino-acid biosynthesis; L-histidine biosynthesis; L-histidine from 5-phospho-alpha-D-ribose 1-diphosphate: step 9/9. Catalyzes the sequential NAD-dependent oxidations of L-histidinol to L-histidinaldehyde and then to L-histidine. The protein is Histidinol dehydrogenase (hisD) of Buchnera aphidicola subsp. Diuraphis noxia.